A 107-amino-acid chain; its full sequence is Nucleoid-associated protein Rru_A3472 (107 aa).

This sequence belongs to the YbaB/EbfC family. As to quaternary structure, homodimer.

The protein resides in the cytoplasm. It is found in the nucleoid. Binds to DNA and alters its conformation. May be involved in regulation of gene expression, nucleoid organization and DNA protection. The polypeptide is Nucleoid-associated protein Rru_A3472 (Rhodospirillum rubrum (strain ATCC 11170 / ATH 1.1.1 / DSM 467 / LMG 4362 / NCIMB 8255 / S1)).